The chain runs to 470 residues: ATP synthase subunit beta (470 aa).

Residue 155-162 (GGAGVGKT) participates in ATP binding.

Belongs to the ATPase alpha/beta chains family. F-type ATPases have 2 components, CF(1) - the catalytic core - and CF(0) - the membrane proton channel. CF(1) has five subunits: alpha(3), beta(3), gamma(1), delta(1), epsilon(1). CF(0) has three main subunits: a(1), b(2) and c(9-12). The alpha and beta chains form an alternating ring which encloses part of the gamma chain. CF(1) is attached to CF(0) by a central stalk formed by the gamma and epsilon chains, while a peripheral stalk is formed by the delta and b chains.

Its subcellular location is the cell membrane. The enzyme catalyses ATP + H2O + 4 H(+)(in) = ADP + phosphate + 5 H(+)(out). Functionally, produces ATP from ADP in the presence of a proton gradient across the membrane. The catalytic sites are hosted primarily by the beta subunits. The polypeptide is ATP synthase subunit beta (Staphylococcus saprophyticus subsp. saprophyticus (strain ATCC 15305 / DSM 20229 / NCIMB 8711 / NCTC 7292 / S-41)).